The chain runs to 693 residues: Phenoloxidase subunit 2 (693 aa).

Residues 1 to 51 constitute a propeptide that is removed on maturation; the sequence is MADVFESLELLFDRPNEPLITPKGENNSVFQLTEQFLTEDYANNGIELNNR. Residues Asn-26 and Asn-64 are each glycosylated (N-linked (GlcNAc...) asparagine). His-213, His-217, and His-243 together coordinate Cu cation. The active-site Proton acceptor is Glu-351. Residues His-366, His-370, and His-406 each contribute to the Cu cation site. Asn-462 and Asn-494 each carry an N-linked (GlcNAc...) asparagine glycan. 2 disulfide bridges follow: Cys-583-Cys-627 and Cys-585-Cys-634. An N-linked (GlcNAc...) asparagine glycan is attached at Asn-680.

Heterodimer. Cu(2+) is required as a cofactor. Post-translationally, the N-terminus is blocked. In terms of tissue distribution, synthesized by hemocytes and released into the hemolymph plasma.

It is found in the secreted. It catalyses the reaction 2 L-dopa + O2 = 2 L-dopaquinone + 2 H2O. The enzyme catalyses L-tyrosine + O2 = L-dopaquinone + H2O. Functionally, this is a copper-containing oxidase that functions in the formation of pigments such as melanins and other polyphenolic compounds. Catalyzes the rate-limiting conversions of tyrosine to DOPA, DOPA to DOPA-quinone and possibly 5,6 dihydroxyindole to indole-5'6 quinone. The sequence is that of Phenoloxidase subunit 2 from Bombyx mori (Silk moth).